Reading from the N-terminus, the 217-residue chain is Adenylate kinase (217 aa).

10 to 15 (GAGKGT) lines the ATP pocket. An NMP region spans residues 30–59 (STGDIFRKNVADDTPLGRLAKQYMDAGDLV). Residues Thr-31, Arg-36, 57–59 (DLV), 85–88 (GFPR), and Gln-92 each bind AMP. The segment at 126-163 (GRRTCADCAHVWHVTYDPPTVDGVCDLCGGKLFQREDD) is LID. Arg-127 is an ATP binding site. Residues Cys-130, Cys-133, Cys-150, and Cys-153 each contribute to the Zn(2+) site. AMP contacts are provided by Arg-160 and Arg-171. Residue Gly-199 coordinates ATP.

Belongs to the adenylate kinase family. Monomer.

The protein resides in the cytoplasm. The catalysed reaction is AMP + ATP = 2 ADP. The protein operates within purine metabolism; AMP biosynthesis via salvage pathway; AMP from ADP: step 1/1. Functionally, catalyzes the reversible transfer of the terminal phosphate group between ATP and AMP. Plays an important role in cellular energy homeostasis and in adenine nucleotide metabolism. The chain is Adenylate kinase from Acidothermus cellulolyticus (strain ATCC 43068 / DSM 8971 / 11B).